The chain runs to 216 residues: Phosphatidylserine decarboxylase proenzyme (216 aa).

Residue serine 183 is the Schiff-base intermediate with substrate; via pyruvic acid of the active site. Serine 183 carries the pyruvic acid (Ser); by autocatalysis modification.

It belongs to the phosphatidylserine decarboxylase family. PSD-A subfamily. As to quaternary structure, heterodimer of a large membrane-associated beta subunit and a small pyruvoyl-containing alpha subunit. Pyruvate is required as a cofactor. Is synthesized initially as an inactive proenzyme. Formation of the active enzyme involves a self-maturation process in which the active site pyruvoyl group is generated from an internal serine residue via an autocatalytic post-translational modification. Two non-identical subunits are generated from the proenzyme in this reaction, and the pyruvate is formed at the N-terminus of the alpha chain, which is derived from the carboxyl end of the proenzyme. The post-translation cleavage follows an unusual pathway, termed non-hydrolytic serinolysis, in which the side chain hydroxyl group of the serine supplies its oxygen atom to form the C-terminus of the beta chain, while the remainder of the serine residue undergoes an oxidative deamination to produce ammonia and the pyruvoyl prosthetic group on the alpha chain.

It is found in the cell membrane. The catalysed reaction is a 1,2-diacyl-sn-glycero-3-phospho-L-serine + H(+) = a 1,2-diacyl-sn-glycero-3-phosphoethanolamine + CO2. Its pathway is phospholipid metabolism; phosphatidylethanolamine biosynthesis; phosphatidylethanolamine from CDP-diacylglycerol: step 2/2. Functionally, catalyzes the formation of phosphatidylethanolamine (PtdEtn) from phosphatidylserine (PtdSer). This Chlorobaculum tepidum (strain ATCC 49652 / DSM 12025 / NBRC 103806 / TLS) (Chlorobium tepidum) protein is Phosphatidylserine decarboxylase proenzyme.